A 125-amino-acid polypeptide reads, in one-letter code: uncharacterized protein (125 aa).

One can recognise an HTH cro/C1-type domain in the interval I19–F73. Residues R30–K49 constitute a DNA-binding region (H-T-H motif).

This is an uncharacterized protein from Rickettsia conorii (strain ATCC VR-613 / Malish 7).